The following is a 509-amino-acid chain: UDP-N-acetylmuramoyl-L-alanyl-D-glutamate--2,6-diaminopimelate ligase (509 aa).

Ser-30 provides a ligand contact to UDP-N-acetyl-alpha-D-muramoyl-L-alanyl-D-glutamate. 110–116 (GTNGKTT) is an ATP binding site. UDP-N-acetyl-alpha-D-muramoyl-L-alanyl-D-glutamate is bound by residues 152-153 (TT), Ser-179, Gln-185, and Arg-187. Lys-219 is subject to N6-carboxylysine. Residues Arg-385, 409 to 412 (DNPR), Gly-476, and Glu-480 each bind meso-2,6-diaminopimelate. Positions 409 to 412 (DNPR) match the Meso-diaminopimelate recognition motif motif.

It belongs to the MurCDEF family. MurE subfamily. Mg(2+) serves as cofactor. Carboxylation is probably crucial for Mg(2+) binding and, consequently, for the gamma-phosphate positioning of ATP.

Its subcellular location is the cytoplasm. It carries out the reaction UDP-N-acetyl-alpha-D-muramoyl-L-alanyl-D-glutamate + meso-2,6-diaminopimelate + ATP = UDP-N-acetyl-alpha-D-muramoyl-L-alanyl-gamma-D-glutamyl-meso-2,6-diaminopimelate + ADP + phosphate + H(+). The protein operates within cell wall biogenesis; peptidoglycan biosynthesis. Its function is as follows. Catalyzes the addition of meso-diaminopimelic acid to the nucleotide precursor UDP-N-acetylmuramoyl-L-alanyl-D-glutamate (UMAG) in the biosynthesis of bacterial cell-wall peptidoglycan. This chain is UDP-N-acetylmuramoyl-L-alanyl-D-glutamate--2,6-diaminopimelate ligase, found in Geobacter sulfurreducens (strain ATCC 51573 / DSM 12127 / PCA).